Consider the following 225-residue polypeptide: Biosynthetic peptidoglycan transglycosylase (225 aa).

A helical transmembrane segment spans residues 8 to 28 (VLLIFIGAILLIQLWIFSSLV).

It belongs to the glycosyltransferase 51 family.

The protein resides in the cell inner membrane. It carries out the reaction [GlcNAc-(1-&gt;4)-Mur2Ac(oyl-L-Ala-gamma-D-Glu-L-Lys-D-Ala-D-Ala)](n)-di-trans,octa-cis-undecaprenyl diphosphate + beta-D-GlcNAc-(1-&gt;4)-Mur2Ac(oyl-L-Ala-gamma-D-Glu-L-Lys-D-Ala-D-Ala)-di-trans,octa-cis-undecaprenyl diphosphate = [GlcNAc-(1-&gt;4)-Mur2Ac(oyl-L-Ala-gamma-D-Glu-L-Lys-D-Ala-D-Ala)](n+1)-di-trans,octa-cis-undecaprenyl diphosphate + di-trans,octa-cis-undecaprenyl diphosphate + H(+). The protein operates within cell wall biogenesis; peptidoglycan biosynthesis. Functionally, peptidoglycan polymerase that catalyzes glycan chain elongation from lipid-linked precursors. The sequence is that of Biosynthetic peptidoglycan transglycosylase from Acinetobacter baumannii (strain ACICU).